Here is a 94-residue protein sequence, read N- to C-terminus: Aspartyl/glutamyl-tRNA(Asn/Gln) amidotransferase subunit C (94 aa).

This sequence belongs to the GatC family. As to quaternary structure, heterotrimer of A, B and C subunits.

The enzyme catalyses L-glutamyl-tRNA(Gln) + L-glutamine + ATP + H2O = L-glutaminyl-tRNA(Gln) + L-glutamate + ADP + phosphate + H(+). The catalysed reaction is L-aspartyl-tRNA(Asn) + L-glutamine + ATP + H2O = L-asparaginyl-tRNA(Asn) + L-glutamate + ADP + phosphate + 2 H(+). Allows the formation of correctly charged Asn-tRNA(Asn) or Gln-tRNA(Gln) through the transamidation of misacylated Asp-tRNA(Asn) or Glu-tRNA(Gln) in organisms which lack either or both of asparaginyl-tRNA or glutaminyl-tRNA synthetases. The reaction takes place in the presence of glutamine and ATP through an activated phospho-Asp-tRNA(Asn) or phospho-Glu-tRNA(Gln). This chain is Aspartyl/glutamyl-tRNA(Asn/Gln) amidotransferase subunit C, found in Hydrogenobaculum sp. (strain Y04AAS1).